Consider the following 297-residue polypeptide: N-acetylneuraminate lyase (297 aa).

Residues Ser47 and Thr48 each coordinate aceneuramate. The active-site Proton donor is Tyr137. The active-site Schiff-base intermediate with substrate is Lys165. Residues Thr167, Gly189, Asp191, Glu192, and Ser208 each coordinate aceneuramate.

This sequence belongs to the DapA family. NanA subfamily. As to quaternary structure, homotetramer.

The protein resides in the cytoplasm. It catalyses the reaction aceneuramate = aldehydo-N-acetyl-D-mannosamine + pyruvate. Its pathway is amino-sugar metabolism; N-acetylneuraminate degradation; D-fructose 6-phosphate from N-acetylneuraminate: step 1/5. Its function is as follows. Catalyzes the reversible aldol cleavage of N-acetylneuraminic acid (sialic acid; Neu5Ac) to form pyruvate and N-acetylmannosamine (ManNAc) via a Schiff base intermediate. The polypeptide is N-acetylneuraminate lyase (Salmonella paratyphi A (strain AKU_12601)).